Consider the following 310-residue polypeptide: Ribosomal protein uL3 glutamine methyltransferase (310 aa).

Belongs to the protein N5-glutamine methyltransferase family. PrmB subfamily.

The catalysed reaction is L-glutaminyl-[ribosomal protein uL3] + S-adenosyl-L-methionine = N(5)-methyl-L-glutaminyl-[ribosomal protein uL3] + S-adenosyl-L-homocysteine + H(+). Its function is as follows. Specifically methylates large ribosomal subunit protein uL3 on 'Gln-150'. This is Ribosomal protein uL3 glutamine methyltransferase from Shigella dysenteriae serotype 1 (strain Sd197).